A 419-amino-acid polypeptide reads, in one-letter code: Multifunctional CCA protein (419 aa).

Residues Gly-8 and Arg-11 each contribute to the ATP site. CTP contacts are provided by Gly-8 and Arg-11. The Mg(2+) site is built by Asp-21 and Asp-23. Residues Arg-91, Arg-137, and Arg-140 each coordinate ATP. CTP is bound by residues Arg-91, Arg-137, and Arg-140. In terms of domain architecture, HD spans 226–327 (TGVHLMMVLD…VRLFDRCDAW (102 aa)).

This sequence belongs to the tRNA nucleotidyltransferase/poly(A) polymerase family. Bacterial CCA-adding enzyme type 1 subfamily. Monomer. Can also form homodimers and oligomers. The cofactor is Mg(2+). Ni(2+) serves as cofactor.

It carries out the reaction a tRNA precursor + 2 CTP + ATP = a tRNA with a 3' CCA end + 3 diphosphate. The enzyme catalyses a tRNA with a 3' CCA end + 2 CTP + ATP = a tRNA with a 3' CCACCA end + 3 diphosphate. Functionally, catalyzes the addition and repair of the essential 3'-terminal CCA sequence in tRNAs without using a nucleic acid template. Adds these three nucleotides in the order of C, C, and A to the tRNA nucleotide-73, using CTP and ATP as substrates and producing inorganic pyrophosphate. tRNA 3'-terminal CCA addition is required both for tRNA processing and repair. Also involved in tRNA surveillance by mediating tandem CCA addition to generate a CCACCA at the 3' terminus of unstable tRNAs. While stable tRNAs receive only 3'-terminal CCA, unstable tRNAs are marked with CCACCA and rapidly degraded. The protein is Multifunctional CCA protein of Leptothrix cholodnii (strain ATCC 51168 / LMG 8142 / SP-6) (Leptothrix discophora (strain SP-6)).